Consider the following 472-residue polypeptide: Pyridine nucleotide-disulfide oxidoreductase domain-containing protein 1 (472 aa).

The protein belongs to the class-I pyridine nucleotide-disulfide oxidoreductase family. PYROXD1 subfamily. FAD is required as a cofactor.

Probable oxidoreductase. This chain is Pyridine nucleotide-disulfide oxidoreductase domain-containing protein 1, found in Drosophila melanogaster (Fruit fly).